Here is a 206-residue protein sequence, read N- to C-terminus: Large ribosomal subunit protein uL4 (206 aa).

The span at 65-76 shows a compositional bias: basic residues; that stretch reads KQKGTGRARHSS. The segment at 65-94 is disordered; it reads KQKGTGRARHSSARAPQFRGGGKAHGPVVR.

This sequence belongs to the universal ribosomal protein uL4 family. Part of the 50S ribosomal subunit.

One of the primary rRNA binding proteins, this protein initially binds near the 5'-end of the 23S rRNA. It is important during the early stages of 50S assembly. It makes multiple contacts with different domains of the 23S rRNA in the assembled 50S subunit and ribosome. Functionally, forms part of the polypeptide exit tunnel. This chain is Large ribosomal subunit protein uL4, found in Bartonella quintana (strain Toulouse) (Rochalimaea quintana).